The sequence spans 258 residues: 5'-nucleotidase SurE (258 aa).

A divalent metal cation contacts are provided by Asp-13, Asp-14, Ser-44, and Asn-92. Positions Ser-237 to Phe-258 are disordered.

The protein belongs to the SurE nucleotidase family. It depends on a divalent metal cation as a cofactor.

The protein localises to the cytoplasm. The catalysed reaction is a ribonucleoside 5'-phosphate + H2O = a ribonucleoside + phosphate. Functionally, nucleotidase that shows phosphatase activity on nucleoside 5'-monophosphates. This chain is 5'-nucleotidase SurE, found in Halobacterium salinarum (strain ATCC 29341 / DSM 671 / R1).